Consider the following 343-residue polypeptide: Succinylglutamate desuccinylase (343 aa).

Zn(2+) contacts are provided by histidine 60, glutamate 63, and histidine 157. Glutamate 221 is a catalytic residue.

The protein belongs to the AspA/AstE family. Succinylglutamate desuccinylase subfamily. Zn(2+) is required as a cofactor.

It carries out the reaction N-succinyl-L-glutamate + H2O = L-glutamate + succinate. It functions in the pathway amino-acid degradation; L-arginine degradation via AST pathway; L-glutamate and succinate from L-arginine: step 5/5. Its function is as follows. Transforms N(2)-succinylglutamate into succinate and glutamate. This chain is Succinylglutamate desuccinylase, found in Idiomarina loihiensis (strain ATCC BAA-735 / DSM 15497 / L2-TR).